The primary structure comprises 611 residues: Translation initiation factor RLI1 (611 aa).

4Fe-4S ferredoxin-type domains are found at residues 7 to 31 and 46 to 75; these read RVAI…SCPV and RIAF…IINL. 2 ABC transporter domains span residues 77–318 and 345–565; these read TNLE…FLDG and AEKS…LKNL. Residues 110 to 117 and 382 to 389 contribute to the ATP site; these read GTNGIGKS and GENGTGKT.

Belongs to the ABC transporter superfamily. ABCE family. In terms of assembly, component of the multifactor complex (MFC). The complex associates with pre-initiation complexes.

The protein resides in the cytoplasm. Its subcellular location is the nucleus. Component of the multifactor complex (MFC) involved in translation initiation. Required for the binding of MFC to the 40S ribosome. Required for the processing and nuclear export of the 60S and 40S ribosomal subunits. In Chaetomium thermophilum (strain DSM 1495 / CBS 144.50 / IMI 039719) (Thermochaetoides thermophila), this protein is Translation initiation factor RLI1 (RLI1).